The following is a 448-amino-acid chain: Glutamate--tRNA ligase 1 (448 aa).

Residues 10–20 carry the 'HIGH' region motif; it reads PSPTGMLHVGN. A 'KMSKS' region motif is present at residues 240-244; it reads KISKR. Position 243 (Lys243) interacts with ATP.

Belongs to the class-I aminoacyl-tRNA synthetase family. Glutamate--tRNA ligase type 1 subfamily. Monomer.

It is found in the cytoplasm. The catalysed reaction is tRNA(Glu) + L-glutamate + ATP = L-glutamyl-tRNA(Glu) + AMP + diphosphate. Functionally, catalyzes the attachment of glutamate to tRNA(Glu) in a two-step reaction: glutamate is first activated by ATP to form Glu-AMP and then transferred to the acceptor end of tRNA(Glu). In Rickettsia typhi (strain ATCC VR-144 / Wilmington), this protein is Glutamate--tRNA ligase 1.